The primary structure comprises 60 residues: DNA gyrase inhibitor YacG (60 aa).

Zn(2+)-binding residues include Cys-3, Cys-6, Cys-18, and Cys-22. The tract at residues 38–60 is disordered; that stretch reads PASSEDEEEPLDQEAETPVAPRH. Residues 41-52 are compositionally biased toward acidic residues; that stretch reads SEDEEEPLDQEA.

This sequence belongs to the DNA gyrase inhibitor YacG family. In terms of assembly, interacts with GyrB. Zn(2+) serves as cofactor.

Functionally, inhibits all the catalytic activities of DNA gyrase by preventing its interaction with DNA. Acts by binding directly to the C-terminal domain of GyrB, which probably disrupts DNA binding by the gyrase. The chain is DNA gyrase inhibitor YacG from Ruegeria pomeroyi (strain ATCC 700808 / DSM 15171 / DSS-3) (Silicibacter pomeroyi).